Here is a 390-residue protein sequence, read N- to C-terminus: Putative gustatory receptor 36c (390 aa).

Residues 1 to 4 (MDLE) are Cytoplasmic-facing. The chain crosses the membrane as a helical span at residues 5-25 (SFLLGAVYYYGLFIGLSNFEF). The Extracellular segment spans residues 26 to 36 (DWNTGRVFTKK). Residues 37–57 (WSTLYAIALDSCIFALYIYHW) form a helical membrane-spanning segment. Topologically, residues 58–75 (TGNTNIVNAIFGRANMLH) are cytoplasmic. Residues 76 to 96 (EYVVAILTGLRIVTGLFTLIL) form a helical membrane-spanning segment. The Extracellular segment spans residues 97 to 132 (RWYQRCKMMDLASKVVRMYVARPQVRRMSRWGILTK). Residues 133-153 (FIFGSITDGLQMAMVLSAMGS) traverse the membrane as a helical segment. The Cytoplasmic segment spans residues 154-165 (VDSQFYLGLGLQ). A helical transmembrane segment spans residues 166 to 186 (YWMFVILNMAMMQQHMIMLFV). Residues 187 to 254 (RTQFQLINTE…MEEVFGIQGA (68 aa)) lie on the Extracellular side of the membrane. The chain crosses the membrane as a helical span at residues 255–275 (MTYGGYYLSSVGTCYLAYSIL). At 276-288 (KHGYENLSMTLST) the chain is on the cytoplasmic side. The chain crosses the membrane as a helical span at residues 289–309 (VILAYSWCFFYYLDGMLNLSV). Residues 310 to 390 (MLHVQDDYWE…FLIQYDIEHF (81 aa)) lie on the Extracellular side of the membrane.

It belongs to the insect chemoreceptor superfamily. Gustatory receptor (GR) family. Gr22e subfamily. In terms of tissue distribution, expressed in neurons of the terminal external chemosensory organ of larvae.

Its subcellular location is the cell membrane. Its function is as follows. Probable gustatory receptor which mediates acceptance or avoidance behavior, depending on its substrates. This is Putative gustatory receptor 36c (Gr36c) from Drosophila melanogaster (Fruit fly).